Reading from the N-terminus, the 141-residue chain is Nucleoside triphosphatase NudI (141 aa).

The Nudix hydrolase domain maps to 1–141 (MRQRTIVCPL…RHTLALKGLL (141 aa)). The Nudix box motif lies at 38 to 59 (GGVEPGERIEEALRREIREELG).

Belongs to the Nudix hydrolase family. NudI subfamily. Monomer. Mg(2+) is required as a cofactor.

It catalyses the reaction a ribonucleoside 5'-triphosphate + H2O = a ribonucleoside 5'-phosphate + diphosphate + H(+). The enzyme catalyses a 2'-deoxyribonucleoside 5'-triphosphate + H2O = a 2'-deoxyribonucleoside 5'-phosphate + diphosphate + H(+). It carries out the reaction dUTP + H2O = dUMP + diphosphate + H(+). The catalysed reaction is dTTP + H2O = dTMP + diphosphate + H(+). It catalyses the reaction dCTP + H2O = dCMP + diphosphate + H(+). Functionally, catalyzes the hydrolysis of nucleoside triphosphates, with a preference for pyrimidine deoxynucleoside triphosphates (dUTP, dTTP and dCTP). The chain is Nucleoside triphosphatase NudI from Salmonella heidelberg (strain SL476).